The chain runs to 363 residues: Phospho-N-acetylmuramoyl-pentapeptide-transferase (363 aa).

Transmembrane regions (helical) follow at residues 4–24 (NLLVSHINSCYIFSIFYNVIV), 28–48 (IAILLSFSISFSLIPILIKYF), 72–92 (TPTMGGIAIIFSIIISTLMLA), 96–116 (NIYVLTTIFGMLSLAILGLID), 129–149 (INATCKLISQIMVSIICCMIV), 169–189 (LTIDLSIFYIPFALFIIIGSS), 200–220 (GLVTVPIIIVSFCLGLMCYLA), 241–261 (ELTVLCSAIIGASLGFLWYNI), 266–286 (IFMGDVGSLSLGGAIGIISVI), 294–314 (GIIGGLFVIEALSAIIQIYSI), and 342–362 (IVSRFWLLSIIFSLIGLSSLI).

Belongs to the glycosyltransferase 4 family. MraY subfamily. It depends on Mg(2+) as a cofactor.

It is found in the cell inner membrane. It carries out the reaction UDP-N-acetyl-alpha-D-muramoyl-L-alanyl-gamma-D-glutamyl-meso-2,6-diaminopimeloyl-D-alanyl-D-alanine + di-trans,octa-cis-undecaprenyl phosphate = di-trans,octa-cis-undecaprenyl diphospho-N-acetyl-alpha-D-muramoyl-L-alanyl-D-glutamyl-meso-2,6-diaminopimeloyl-D-alanyl-D-alanine + UMP. It functions in the pathway cell wall biogenesis; peptidoglycan biosynthesis. In terms of biological role, catalyzes the initial step of the lipid cycle reactions in the biosynthesis of the cell wall peptidoglycan: transfers peptidoglycan precursor phospho-MurNAc-pentapeptide from UDP-MurNAc-pentapeptide onto the lipid carrier undecaprenyl phosphate, yielding undecaprenyl-pyrophosphoryl-MurNAc-pentapeptide, known as lipid I. This is Phospho-N-acetylmuramoyl-pentapeptide-transferase from Orientia tsutsugamushi (strain Ikeda) (Rickettsia tsutsugamushi).